The primary structure comprises 95 residues: DNA-directed RNA polymerase subunit Rpo6 (95 aa).

It belongs to the archaeal Rpo6/eukaryotic RPB6 RNA polymerase subunit family. As to quaternary structure, part of the RNA polymerase complex.

The protein localises to the cytoplasm. It carries out the reaction RNA(n) + a ribonucleoside 5'-triphosphate = RNA(n+1) + diphosphate. Its function is as follows. DNA-dependent RNA polymerase (RNAP) catalyzes the transcription of DNA into RNA using the four ribonucleoside triphosphates as substrates. The protein is DNA-directed RNA polymerase subunit Rpo6 of Saccharolobus islandicus (strain M.16.27) (Sulfolobus islandicus).